A 432-amino-acid chain; its full sequence is Trigger factor (432 aa).

Residues 161–246 (GKRVSIDFVG…VNKVEARQLP (86 aa)) form the PPIase FKBP-type domain.

It belongs to the FKBP-type PPIase family. Tig subfamily.

It is found in the cytoplasm. The enzyme catalyses [protein]-peptidylproline (omega=180) = [protein]-peptidylproline (omega=0). In terms of biological role, involved in protein export. Acts as a chaperone by maintaining the newly synthesized protein in an open conformation. Functions as a peptidyl-prolyl cis-trans isomerase. The protein is Trigger factor of Vibrio vulnificus (strain YJ016).